A 231-amino-acid chain; its full sequence is Probable septum site-determining protein MinC (231 aa).

Positions 102–125 are disordered; that stretch reads KEKAPRPAPAPQAPAQNTTPVTKT.

The protein belongs to the MinC family. Interacts with MinD and FtsZ.

Cell division inhibitor that blocks the formation of polar Z ring septums. Rapidly oscillates between the poles of the cell to destabilize FtsZ filaments that have formed before they mature into polar Z rings. Prevents FtsZ polymerization. The protein is Probable septum site-determining protein MinC of Escherichia coli O139:H28 (strain E24377A / ETEC).